The sequence spans 877 residues: Alanine--tRNA ligase (877 aa).

The Zn(2+) site is built by His-567, His-571, Cys-669, and His-673.

This sequence belongs to the class-II aminoacyl-tRNA synthetase family. It depends on Zn(2+) as a cofactor.

The protein resides in the cytoplasm. The enzyme catalyses tRNA(Ala) + L-alanine + ATP = L-alanyl-tRNA(Ala) + AMP + diphosphate. In terms of biological role, catalyzes the attachment of alanine to tRNA(Ala) in a two-step reaction: alanine is first activated by ATP to form Ala-AMP and then transferred to the acceptor end of tRNA(Ala). Also edits incorrectly charged Ser-tRNA(Ala) and Gly-tRNA(Ala) via its editing domain. The chain is Alanine--tRNA ligase from Rickettsia bellii (strain RML369-C).